A 208-amino-acid chain; its full sequence is Thymidylate kinase (208 aa).

12–19 (GVDGAGKS) lines the ATP pocket.

Belongs to the thymidylate kinase family.

It catalyses the reaction dTMP + ATP = dTDP + ADP. Functionally, phosphorylation of dTMP to form dTDP in both de novo and salvage pathways of dTTP synthesis. The polypeptide is Thymidylate kinase (Bordetella bronchiseptica (strain ATCC BAA-588 / NCTC 13252 / RB50) (Alcaligenes bronchisepticus)).